The sequence spans 377 residues: Chaperone protein DnaJ (377 aa).

Residues 5-70 (DYYEILGVAK…QKRAAYDQFG (66 aa)) enclose the J domain. The CR-type zinc finger occupies 130-208 (GTEVKIRVPS…CHGQGRVEEH (79 aa)). Positions 143, 146, 160, 163, 182, 185, 196, and 199 each coordinate Zn(2+). CXXCXGXG motif repeat units follow at residues 143–150 (CGECHGSG), 160–167 (CGTCGGVG), 182–189 (CPRCHGTG), and 196–203 (CKACHGQG).

The protein belongs to the DnaJ family. Homodimer. Zn(2+) is required as a cofactor.

It is found in the cytoplasm. Participates actively in the response to hyperosmotic and heat shock by preventing the aggregation of stress-denatured proteins and by disaggregating proteins, also in an autonomous, DnaK-independent fashion. Unfolded proteins bind initially to DnaJ; upon interaction with the DnaJ-bound protein, DnaK hydrolyzes its bound ATP, resulting in the formation of a stable complex. GrpE releases ADP from DnaK; ATP binding to DnaK triggers the release of the substrate protein, thus completing the reaction cycle. Several rounds of ATP-dependent interactions between DnaJ, DnaK and GrpE are required for fully efficient folding. Also involved, together with DnaK and GrpE, in the DNA replication of plasmids through activation of initiation proteins. The chain is Chaperone protein DnaJ from Thioalkalivibrio sulfidiphilus (strain HL-EbGR7).